The chain runs to 50 residues: Small ribosomal subunit protein eS31 (50 aa).

Zn(2+)-binding residues include C22, C25, C40, and C43. A C4-type zinc finger spans residues 22 to 43 (CPRCGPGVFMADHGDRWACGKC).

It belongs to the eukaryotic ribosomal protein eS31 family. As to quaternary structure, part of the 30S ribosomal subunit. Requires Zn(2+) as cofactor.

The protein is Small ribosomal subunit protein eS31 of Pyrococcus horikoshii (strain ATCC 700860 / DSM 12428 / JCM 9974 / NBRC 100139 / OT-3).